A 109-amino-acid polypeptide reads, in one-letter code: Oncomodulin (109 aa).

Position 2 is an N-acetylserine (serine 2). EF-hand domains follow at residues 39 to 74 and 78 to 109; these read MSAS…FESG and LTES…MVHS. Ca(2+) is bound by residues aspartate 52, aspartate 54, serine 56, tyrosine 58, glutamate 63, aspartate 91, aspartate 93, aspartate 95, lysine 97, and glutamate 102.

This sequence belongs to the parvalbumin family. In terms of tissue distribution, abundant in the organ of Corti.

Its function is as follows. Has some calmodulin-like activity with respect to enzyme activation and growth regulation. Binds two calcium ions. The sequence is that of Oncomodulin (OCM) from Cavia porcellus (Guinea pig).